We begin with the raw amino-acid sequence, 490 residues long: Betaine aldehyde dehydrogenase (490 aa).

The K(+) site is built by Ile27 and Asp93. 150-152 (GAW) contacts NAD(+). The active-site Charge relay system is Lys162. 176-179 (KPSE) provides a ligand contact to NAD(+). Val180 is a K(+) binding site. Residue 230–233 (GTTT) coordinates NAD(+). Position 246 (Leu246) interacts with K(+). The Proton acceptor role is filled by Glu252. Positions 254, 286, and 387 each coordinate NAD(+). The active-site Nucleophile is the Cys286. Cysteine sulfenic acid (-SOH) is present on Cys286. The K(+) site is built by Lys457 and Gly460. Glu464 functions as the Charge relay system in the catalytic mechanism.

Belongs to the aldehyde dehydrogenase family. In terms of assembly, dimer of dimers. Requires K(+) as cofactor.

The enzyme catalyses betaine aldehyde + NAD(+) + H2O = glycine betaine + NADH + 2 H(+). The protein operates within amine and polyamine biosynthesis; betaine biosynthesis via choline pathway; betaine from betaine aldehyde: step 1/1. Involved in the biosynthesis of the osmoprotectant glycine betaine. Catalyzes the irreversible oxidation of betaine aldehyde to the corresponding acid. This Pseudomonas entomophila (strain L48) protein is Betaine aldehyde dehydrogenase.